A 470-amino-acid chain; its full sequence is Protein C-ets-2 (470 aa).

One can recognise a PNT domain in the interval 85-170 (ATFSGFKKEQ…EHLEQMIKEN (86 aa)). S225 is subject to Phosphoserine. The segment at 270 to 291 (ASGKPRDHDSAETGGDSFESSE) is disordered. Phosphoserine occurs at positions 296, 299, and 302. A DNA-binding region (ETS) is located at residues 364-444 (IQLWQFLLEL…SGKRYVYRFV (81 aa)).

It belongs to the ETS family. In terms of processing, phosphorylation by CDK10 at Ser-225 may create a phosphodegron that targets ETS2 for proteasomal degradation.

Its subcellular location is the nucleus. Transcription factor activating transcription. Binds specifically the GGA DNA motif in gene promoters and stimulates transcription of those genes. The chain is Protein C-ets-2 (ETS2) from Bos taurus (Bovine).